A 141-amino-acid chain; its full sequence is Transcription antitermination protein NusB (141 aa).

Belongs to the NusB family.

In terms of biological role, involved in transcription antitermination. Required for transcription of ribosomal RNA (rRNA) genes. Binds specifically to the boxA antiterminator sequence of the ribosomal RNA (rrn) operons. The sequence is that of Transcription antitermination protein NusB from Treponema pallidum (strain Nichols).